The chain runs to 401 residues: F-box protein At1g69090 (401 aa).

Positions 1-23 (MASPTLALAQSPPPKSPAVSVSQ) are disordered. The 48-residue stretch at 27–74 (HCWSKLPLDLMQLVFERLAFLDFERAKSVCSSWQFGSKQSKPNNQIPW) folds into the F-box domain.

This Arabidopsis thaliana (Mouse-ear cress) protein is F-box protein At1g69090.